The primary structure comprises 476 residues: Immune evasion protein OPG047 (476 aa).

Positions 10-90 (CKNILALSMT…SYTGKVYIDS (81 aa)) constitute a BTB domain. The 94-residue stretch at 125-218 (CVECYMMGIE…SNYLSPRGIN (94 aa)) folds into the BACK domain. 5 Kelch repeats span residues 269–315 (VVYL…PANN), 316–359 (KLYV…SINN), 361–404 (IYVM…VFGR), 406–443 (LFLV…IVDN), and 444–476 (KLLL…WDGK).

The protein belongs to the orthopoxvirus OPG047 family.

Its function is as follows. Might have a role in the suppression of host immune response. The polypeptide is Immune evasion protein OPG047 (OPG047) (Vaccinia virus (strain Ankara) (VACV)).